A 449-amino-acid polypeptide reads, in one-letter code: MHPFASYVLRSYYRGTGWNEDNLYANLTRSSNAILDFSVPRGLHFSISKSPNPLFKTTYSMNALPSLNGSIGYIFTSCELDVKGSGDVRFKDMVDRFRVYDQPRRPEGKEEEWLAGERVDTRDYLLYGRVYIPTGRLDALYSTRLSPTLQAMVAAISDPRSSLFAESPRGIAAPSSNIMFSLQHDTGKWCTEYTWSAEDGMWGVRCLHNFGKVGGPSEPVEDSEKSTAAPTKTRSGVKRIDEEDAMEGGLKGRISAGAEFYFSAKEKSAGVSTGIRFTTLPDATPPSFQLPSSSPTQPSLLAHGAPSQPPTTITALFNPMLGHMSGAYSARVSRDLSMSSRFDFNVYSYESEWSIGAEWWTRRGRGMFTSNPPAADTSEKTPSSPPALEAVGDVTGVVKARASTTTDFSLMWEGRLHNMLVSLGIVSNLTSRSKPIKAIGLELSYFSSG.

Disordered stretches follow at residues 215-244 (GPSE…DEED) and 282-307 (DATP…GAPS). Positions 285 to 301 (PPSFQLPSSSPTQPSLL) are enriched in low complexity.

It belongs to the MDM10 family. As to quaternary structure, component of the ER-mitochondria encounter structure (ERMES) or MDM complex, composed of MMM1, MDM10, MDM12 and MDM34. Associates with the mitochondrial outer membrane sorting assembly machinery SAM(core) complex.

The protein resides in the mitochondrion outer membrane. Functionally, component of the ERMES/MDM complex, which serves as a molecular tether to connect the endoplasmic reticulum and mitochondria. Components of this complex are involved in the control of mitochondrial shape and protein biogenesis and may function in phospholipid exchange. MDM10 is involved in the late assembly steps of the general translocase of the mitochondrial outer membrane (TOM complex). Functions in the TOM40-specific route of the assembly of outer membrane beta-barrel proteins, including the association of TOM40 with the receptor TOM22 and small TOM proteins. Can associate with the SAM(core) complex as well as the MDM12-MMM1 complex, both involved in late steps of the major beta-barrel assembly pathway, that is responsible for biogenesis of all outer membrane beta-barrel proteins. May act as a switch that shuttles between both complexes and channels precursor proteins into the TOM40-specific pathway. Plays a role in mitochondrial morphology and in the inheritance of mitochondria. This chain is Mitochondrial distribution and morphology protein 10, found in Postia placenta (strain ATCC 44394 / Madison 698-R) (Brown rot fungus).